The following is a 347-amino-acid chain: Homocysteine S-methyltransferase 3 (347 aa).

Residues 12–333 (LMTDFLEKCG…NTIRAIAKVL (322 aa)) form the Hcy-binding domain. Positions 251, 318, and 319 each coordinate Zn(2+).

In terms of assembly, monomer. Zn(2+) serves as cofactor. Expressed predominantly in rosette leaves. Expressed in roots, cauline leaves and developing seeds.

The enzyme catalyses S-methyl-L-methionine + L-homocysteine = 2 L-methionine + H(+). Its function is as follows. Catalyzes methyl transfer from S-methylmethionine (SMM) to adenosyl-L-homocysteine (AdoMet). SMM degradation (by HMT-1, HMT-2 and HMT-3) and biosynthesis (by MMT1) constitute the SMM cycle in plants, which is probably required to achieve short term control of AdoMet level. This chain is Homocysteine S-methyltransferase 3 (HMT3), found in Arabidopsis thaliana (Mouse-ear cress).